The sequence spans 288 residues: 33 kDa chaperonin (288 aa).

2 disulfide bridges follow: C233–C235 and C267–C270.

Belongs to the HSP33 family. In terms of processing, under oxidizing conditions two disulfide bonds are formed involving the reactive cysteines. Under reducing conditions zinc is bound to the reactive cysteines and the protein is inactive.

It localises to the cytoplasm. Functionally, redox regulated molecular chaperone. Protects both thermally unfolding and oxidatively damaged proteins from irreversible aggregation. Plays an important role in the bacterial defense system toward oxidative stress. This is 33 kDa chaperonin from Pasteurella multocida (strain Pm70).